A 195-amino-acid chain; its full sequence is Lipid A acyltransferase PagP (195 aa).

Residues 1–30 (MRLTLTSRSRLFVLSSLLFISTFDVLSAQA) form the signal peptide. Residues H67, D110, and S111 contribute to the active site.

Belongs to the lipid A palmitoyltransferase family. Homodimer.

It localises to the cell outer membrane. It catalyses the reaction a lipid A + a 1,2-diacyl-sn-glycero-3-phosphocholine = a hepta-acyl lipid A + a 2-acyl-sn-glycero-3-phosphocholine. The catalysed reaction is a lipid IVA + a 1,2-diacyl-sn-glycero-3-phosphocholine = a lipid IVB + a 2-acyl-sn-glycero-3-phosphocholine. It carries out the reaction a lipid IIA + a 1,2-diacyl-sn-glycero-3-phosphocholine = a lipid IIB + a 2-acyl-sn-glycero-3-phosphocholine. Functionally, transfers a fatty acid residue from the sn-1 position of a phospholipid to the N-linked hydroxyfatty acid chain on the proximal unit of lipid A or its precursors. This Dickeya chrysanthemi (strain Ech1591) (Dickeya zeae (strain Ech1591)) protein is Lipid A acyltransferase PagP.